Reading from the N-terminus, the 369-residue chain is tRNA/tmRNA (uracil-C(5))-methyltransferase (369 aa).

Residues Gln190, Tyr218, Asn223, Glu239, and Asp301 each contribute to the S-adenosyl-L-methionine site. Cys326 serves as the catalytic Nucleophile. The Proton acceptor role is filled by Glu360.

Belongs to the class I-like SAM-binding methyltransferase superfamily. RNA M5U methyltransferase family. TrmA subfamily.

It catalyses the reaction uridine(54) in tRNA + S-adenosyl-L-methionine = 5-methyluridine(54) in tRNA + S-adenosyl-L-homocysteine + H(+). The catalysed reaction is uridine(341) in tmRNA + S-adenosyl-L-methionine = 5-methyluridine(341) in tmRNA + S-adenosyl-L-homocysteine + H(+). In terms of biological role, dual-specificity methyltransferase that catalyzes the formation of 5-methyluridine at position 54 (m5U54) in all tRNAs, and that of position 341 (m5U341) in tmRNA (transfer-mRNA). This is tRNA/tmRNA (uracil-C(5))-methyltransferase from Vibrio atlanticus (strain LGP32) (Vibrio splendidus (strain Mel32)).